A 414-amino-acid polypeptide reads, in one-letter code: Serine/threonine transporter SstT (414 aa).

The next 8 membrane-spanning stretches (helical) occupy residues 16-36 (GSLV…AWIS), 46-66 (LGTL…LMLV), 84-104 (ILFL…VFSF), 143-163 (ALLN…GFAL), 180-200 (AVTF…FGLV), 219-239 (LVVL…LLVF), 300-320 (MAGA…TLGV), and 332-352 (VVAS…LLLI).

Belongs to the dicarboxylate/amino acid:cation symporter (DAACS) (TC 2.A.23) family.

It localises to the cell inner membrane. It catalyses the reaction L-serine(in) + Na(+)(in) = L-serine(out) + Na(+)(out). It carries out the reaction L-threonine(in) + Na(+)(in) = L-threonine(out) + Na(+)(out). Functionally, involved in the import of serine and threonine into the cell, with the concomitant import of sodium (symport system). The polypeptide is Serine/threonine transporter SstT (Salmonella newport (strain SL254)).